Here is a 92-residue protein sequence, read N- to C-terminus: MARTVNCVYLNKEAEGLGFQLYPGDLGKRIFDNVSKEAWALWQSKQTMLINEKKLNMMNVDDRKFLEEQMVNFLFEGKDVEIEGYVPQKDDE.

Belongs to the Fe(2+)-trafficking protein family.

Functionally, could be a mediator in iron transactions between iron acquisition and iron-requiring processes, such as synthesis and/or repair of Fe-S clusters in biosynthetic enzymes. This chain is Probable Fe(2+)-trafficking protein, found in Shewanella halifaxensis (strain HAW-EB4).